The primary structure comprises 166 residues: MQFMFAALKLELGDTLYYLLIFAALLLLVKHFAWGPVTKMMEERRQKVISDLDQAESDRKKAELLANQREAALKDSKQEATQILSTAKSNAEKTKNNIISQADQEAAAIRKRASEDAAQAKTDALNEARDQVADISVAIAEKVISKNLSAADQKDLVDQFIKGLND.

Residues 15 to 37 (TLYYLLIFAALLLLVKHFAWGPV) traverse the membrane as a helical segment.

This sequence belongs to the ATPase B chain family. F-type ATPases have 2 components, F(1) - the catalytic core - and F(0) - the membrane proton channel. F(1) has five subunits: alpha(3), beta(3), gamma(1), delta(1), epsilon(1). F(0) has three main subunits: a(1), b(2) and c(10-14). The alpha and beta chains form an alternating ring which encloses part of the gamma chain. F(1) is attached to F(0) by a central stalk formed by the gamma and epsilon chains, while a peripheral stalk is formed by the delta and b chains.

It is found in the cell membrane. Functionally, f(1)F(0) ATP synthase produces ATP from ADP in the presence of a proton or sodium gradient. F-type ATPases consist of two structural domains, F(1) containing the extramembraneous catalytic core and F(0) containing the membrane proton channel, linked together by a central stalk and a peripheral stalk. During catalysis, ATP synthesis in the catalytic domain of F(1) is coupled via a rotary mechanism of the central stalk subunits to proton translocation. Its function is as follows. Component of the F(0) channel, it forms part of the peripheral stalk, linking F(1) to F(0). The chain is ATP synthase subunit b from Lactobacillus johnsonii (strain CNCM I-12250 / La1 / NCC 533).